The sequence spans 240 residues: Ribonuclease PH (240 aa).

Residues arginine 87 and 125-127 (GTR) contribute to the phosphate site.

Belongs to the RNase PH family. In terms of assembly, homohexameric ring arranged as a trimer of dimers.

It catalyses the reaction tRNA(n+1) + phosphate = tRNA(n) + a ribonucleoside 5'-diphosphate. Phosphorolytic 3'-5' exoribonuclease that plays an important role in tRNA 3'-end maturation. Removes nucleotide residues following the 3'-CCA terminus of tRNAs; can also add nucleotides to the ends of RNA molecules by using nucleoside diphosphates as substrates, but this may not be physiologically important. Probably plays a role in initiation of 16S rRNA degradation (leading to ribosome degradation) during starvation. The protein is Ribonuclease PH of Pseudomonas syringae pv. syringae (strain B728a).